The following is a 203-amino-acid chain: Probable proteasome subunit beta type-1 (203 aa).

The propeptide at 1-10 is removed in mature form; the sequence is MMSNEKEMTG. Thr-11 acts as the Nucleophile in catalysis.

This sequence belongs to the peptidase T1B family. In terms of assembly, the 26S proteasome consists of a 20S proteasome core and two 19S regulatory subunits. The 20S proteasome core is composed of 28 subunits that are arranged in four stacked rings, resulting in a barrel-shaped structure. The two end rings are each formed by seven alpha subunits, and the two central rings are each formed by seven beta subunits. The catalytic chamber with the active sites is on the inside of the barrel.

The protein localises to the cytoplasm. The protein resides in the nucleus. The enzyme catalyses Cleavage of peptide bonds with very broad specificity.. In terms of biological role, the proteasome degrades poly-ubiquitinated proteins in the cytoplasm and in the nucleus. It is essential for the regulated turnover of proteins and for the removal of misfolded proteins. The proteasome is a multicatalytic proteinase complex that is characterized by its ability to cleave peptides with Arg, Phe, Tyr, Leu, and Glu adjacent to the leaving group at neutral or slightly basic pH. It has an ATP-dependent proteolytic activity. In Encephalitozoon cuniculi (strain GB-M1) (Microsporidian parasite), this protein is Probable proteasome subunit beta type-1 (PRE3).